The primary structure comprises 502 residues: mRNA cap guanine-N(7) methyltransferase (502 aa).

The segment at 1-118 is disordered; the sequence is MADENPQAQG…SQQEEAMRFS (118 aa). Positions 93–115 are enriched in basic and acidic residues; sequence LVDRETLRRRQEERERSQQEEAM. An mRNA cap 0 methyltransferase domain is found at 146-502; sequence SKIKGLRSFN…FYHAFCFYKV (357 aa). 155-156 lines the mRNA pocket; that stretch reads NN. Residues K159, G202, D226, D264, 307–309, and Y312 each bind S-adenosyl-L-methionine; that span reads MFT. The segment covering 360 to 369 has biased composition (basic and acidic residues); that stretch reads ERETAAKKEE. The disordered stretch occupies residues 360–381; the sequence is ERETAAKKEEAEPEDGEVEEDD. A compositionally biased stretch (acidic residues) spans 370-381; sequence AEPEDGEVEEDD.

Belongs to the class I-like SAM-binding methyltransferase superfamily. mRNA cap 0 methyltransferase family.

It localises to the nucleus. The enzyme catalyses a 5'-end (5'-triphosphoguanosine)-ribonucleoside in mRNA + S-adenosyl-L-methionine = a 5'-end (N(7)-methyl 5'-triphosphoguanosine)-ribonucleoside in mRNA + S-adenosyl-L-homocysteine. In terms of biological role, responsible for methylating the 5'-cap structure of mRNAs. The polypeptide is mRNA cap guanine-N(7) methyltransferase (abd1) (Aspergillus oryzae (strain ATCC 42149 / RIB 40) (Yellow koji mold)).